We begin with the raw amino-acid sequence, 427 residues long: N-acylglucosamine 2-epimerase (427 aa).

The tract at residues 195–216 is leucine-zipper; sequence LLNLVEQLGEADEELAGKYAEL.

This sequence belongs to the N-acylglucosamine 2-epimerase family. As to quaternary structure, homodimer. Forms a heterodimer with renin and inhibits its activity.

It carries out the reaction an N-acyl-D-glucosamine = an N-acyl-D-mannosamine. It participates in amino-sugar metabolism; N-acetylneuraminate degradation. Its activity is regulated as follows. Inhibited by N-ethylmaleimide, 5,5'-dithiobis-2-nitrobenzoate and iodoacetic acid. Catalyzes the interconversion of N-acetylglucosamine to N-acetylmannosamine. Involved in the N-glycolylneuraminic acid (Neu5Gc) degradation pathway: although human is not able to catalyze formation of Neu5Gc due to the inactive CMAHP enzyme, Neu5Gc is present in food and must be degraded. This is N-acylglucosamine 2-epimerase (RENBP) from Homo sapiens (Human).